The primary structure comprises 244 residues: 1-(5-phosphoribosyl)-5-[(5-phosphoribosylamino)methylideneamino] imidazole-4-carboxamide isomerase (244 aa).

Aspartate 8 functions as the Proton acceptor in the catalytic mechanism. Catalysis depends on aspartate 129, which acts as the Proton donor.

The protein belongs to the HisA/HisF family.

The protein localises to the cytoplasm. It carries out the reaction 1-(5-phospho-beta-D-ribosyl)-5-[(5-phospho-beta-D-ribosylamino)methylideneamino]imidazole-4-carboxamide = 5-[(5-phospho-1-deoxy-D-ribulos-1-ylimino)methylamino]-1-(5-phospho-beta-D-ribosyl)imidazole-4-carboxamide. Its pathway is amino-acid biosynthesis; L-histidine biosynthesis; L-histidine from 5-phospho-alpha-D-ribose 1-diphosphate: step 4/9. This Thermodesulfovibrio yellowstonii (strain ATCC 51303 / DSM 11347 / YP87) protein is 1-(5-phosphoribosyl)-5-[(5-phosphoribosylamino)methylideneamino] imidazole-4-carboxamide isomerase.